A 459-amino-acid chain; its full sequence is N,N-dimethyl phenylurea N-demethylase subunit alpha (459 aa).

The region spanning 55–166 (WVFVAHETEI…VESYHGFIFT (112 aa)) is the Rieske domain. Residues Cys-97, His-99, Cys-117, and His-120 each coordinate [2Fe-2S] cluster. 3 residues coordinate Fe cation: His-225, His-230, and Asp-386.

It belongs to the bacterial ring-hydroxylating dioxygenase alpha subunit family. PdmA (subunit alpha) and PdmB (subunit beta) form the oxygenase component of a bacterial Rieske non-heme iron oxygenase (RO) system. It depends on [2Fe-2S] cluster as a cofactor. The cofactor is Fe cation.

It catalyses the reaction a 1,1-dimethyl-3-phenylurea + 2 reduced [2Fe-2S]-[ferredoxin] + O2 + 2 H(+) = a 1-methyl-3-phenylurea + formaldehyde + 2 oxidized [2Fe-2S]-[ferredoxin] + H2O. The enzyme catalyses isoproturon + 2 reduced [2Fe-2S]-[ferredoxin] + O2 + 2 H(+) = 1-methyl-3-[4-(propan-2-yl)phenyl]urea + formaldehyde + 2 oxidized [2Fe-2S]-[ferredoxin] + H2O. The catalysed reaction is chlorotoluron + 2 reduced [2Fe-2S]-[ferredoxin] + O2 + 2 H(+) = 3-(3-chloro-4-methylphenyl)-1-methylurea + formaldehyde + 2 oxidized [2Fe-2S]-[ferredoxin] + H2O. It carries out the reaction metoxuron + 2 reduced [2Fe-2S]-[ferredoxin] + O2 + 2 H(+) = 3-(3-chloro-4-methoxylphenyl)-1-methylurea + formaldehyde + 2 oxidized [2Fe-2S]-[ferredoxin] + H2O. It catalyses the reaction monuron + 2 reduced [2Fe-2S]-[ferredoxin] + O2 + 2 H(+) = 3-(4-chlorophenyl)-1-methylurea + formaldehyde + 2 oxidized [2Fe-2S]-[ferredoxin] + H2O. The enzyme catalyses diuron + 2 reduced [2Fe-2S]-[ferredoxin] + O2 + 2 H(+) = 3-(3,4-dichlorophenyl)-1-methylurea + formaldehyde + 2 oxidized [2Fe-2S]-[ferredoxin] + H2O. The catalysed reaction is fluometuron + 2 reduced [2Fe-2S]-[ferredoxin] + O2 + 2 H(+) = 3-[3-(trifluoromethyl)phenyl]-1-methylurea + formaldehyde + 2 oxidized [2Fe-2S]-[ferredoxin] + H2O. It carries out the reaction fenuron + 2 reduced [2Fe-2S]-[ferredoxin] + O2 + 2 H(+) = 1-methyl-3-phenylurea + formaldehyde + 2 oxidized [2Fe-2S]-[ferredoxin] + H2O. It participates in xenobiotic degradation. Activity is stimulated in vitro by coexpression of a [3Fe-4S]-type ferredoxin. Part of the multicomponent N,N-dimethyl phenylurea N-demethylase responsible for the initial N-demethylation step during the bacterial metabolism of N,N-dimethyl-substituted phenylurea herbicides. Catalyzes the mono-N-demethylation of N,N-dimethyl-substituted phenylurea herbicides to their mono-N-demethylated derivatives. Is active on isoproturon (IPU), chlorotoluron, metoxuron, monoron, diuron, fluometuron and fenuron, but cannot transform the N-methoxy-N-methyl-substituted herbicides. The sequence is that of N,N-dimethyl phenylurea N-demethylase subunit alpha from Sphingobium sp. (strain YBL2).